Consider the following 627-residue polypeptide: Meiosis-specific transcription factor NDT80 (627 aa).

A DNA-binding region (NDT80) is located at residues 28-335 (EEDTPVILTQ…RSPSNYASSQ (308 aa)). Residues 324–410 (RGRSPSNYAS…MEASKENEDP (87 aa)) form a disordered region. Composition is skewed to polar residues over residues 327-351 (SPSN…SQNS) and 386-401 (SGAS…STPM).

As to quaternary structure, binds to DNA as a monomer. Post-translationally, phosphorylated by pachytene checkpoint kinase IME2, but also phosphorylated in an IME2-independent manner. Phosphorylation probably eliminates SUM1-mediated repression and is also required for full transcriptional activation activity. Phosphorylation of the DNA-binding domain by IME2 does not alter DNA binding affinity.

The protein localises to the nucleus. Functionally, transcription factor required for successful completion of meiosis and spore formation. Gets activated after completion of meiotic recombination at the end of prophase I. Recognizes and binds to the middle sporulation element (MSE) 5'-C[AG]CAAA[AT]-3' in the promoter region of stage-specific genes that are required for progression through meiosis and sporulation. Competes for binding to MSE with the transcriptional repressor SUM1, which represses middle sporulation-specific genes during mitosis and early sporulation. This Saccharomyces cerevisiae (strain ATCC 204508 / S288c) (Baker's yeast) protein is Meiosis-specific transcription factor NDT80 (NDT80).